The sequence spans 260 residues: Proansamycin X synthase (260 aa).

Catalysis depends on Cys73, which acts as the Acyl-thioester intermediate. Catalysis depends on residues His111 and Asp126.

It belongs to the arylamine N-acetyltransferase family.

Its pathway is antibiotic biosynthesis; rifamycin B biosynthesis. In terms of biological role, catalyzes the release of the completed linear polyketide from the rif PKS by forming an intramolecular amide bond, in this way terminating polyketide assembly and forming the macrocyclic compound proansamycin X, an intermediate in the rifamycin B biosynthesis. The polypeptide is Proansamycin X synthase (rifF) (Amycolatopsis mediterranei (strain S699) (Nocardia mediterranei)).